A 209-amino-acid chain; its full sequence is Protein TIFY 11c (209 aa).

The Tify domain occupies Glu-93–Ser-128. Residues Pro-153–Leu-177 carry the Jas motif. The Nuclear localization signal signature appears at Ala-155–Arg-162. Residues Glu-175–Leu-209 form a disordered region. The segment covering Glu-179–Gly-196 has biased composition (basic and acidic residues).

The protein belongs to the TIFY/JAZ family. Post-translationally, ubiquitinated. Targeted for degradation by the SCF(COI1) E3 ubiquitin ligase-proteasome pathway during jasmonate signaling.

It is found in the nucleus. Its function is as follows. Repressor of jasmonate responses. The protein is Protein TIFY 11c of Oryza sativa subsp. indica (Rice).